The sequence spans 202 residues: Endothelin-1 (202 aa).

The N-terminal stretch at 1 to 25 is a signal peptide; the sequence is MDYFPVIFSLLFVAFQGAPETAVLG. Residues 26–50 constitute a propeptide that is removed on maturation; the sequence is AELSPRAEKEVQSPPPSTSWRPRRS. The disordered stretch occupies residues 28-47; that stretch reads LSPRAEKEVQSPPPSTSWRP. Cystine bridges form between Cys-53/Cys-67 and Cys-55/Cys-63. A propeptide spanning residues 74–202 is cleaved from the precursor; it reads VNTPERVVPY…DQKLIHNRAH (129 aa). Positions 110 to 124 are endothelin-like; sequence CQCAHQKDKKCWNFC.

The protein belongs to the endothelin/sarafotoxin family.

It localises to the secreted. In terms of biological role, endothelins are endothelium-derived vasoconstrictor peptides. Probable ligand for G-protein coupled receptors EDNRA and EDNRB which activates PTK2B, BCAR1, BCAR3 and, GTPases RAP1 and RHOA cascade in glomerular mesangial cells. Also binds the DEAR/FBXW7-AS1 receptor. Promotes mesenteric arterial wall remodeling via activation of ROCK signaling and subsequent colocalization of NFATC3 with F-actin filaments. NFATC3 then translocates to the nucleus where it subsequently promotes the transcription of the smooth muscle hypertrophy and differentiation marker ACTA2. This Rattus norvegicus (Rat) protein is Endothelin-1 (Edn1).